Reading from the N-terminus, the 502-residue chain is Bone morphogenetic protein receptor type-1B (502 aa).

The first 13 residues, 1–13 (MLLRSSGKLNVGT), serve as a signal peptide directing secretion. Residues 1 to 24 (MLLRSSGKLNVGTKKEDGESTAPT) form a disordered region. Residues 14–126 (KKEDGESTAP…DFVDGPIHHK (113 aa)) lie on the Extracellular side of the membrane. 5 disulfide bridges follow: Cys-32-Cys-53, Cys-34-Cys-38, Cys-47-Cys-71, Cys-81-Cys-95, and Cys-96-Cys-102. Residues 127–148 (ALLISVTVCSLLLVLIILFCYF) traverse the membrane as a helical segment. Residues 149 to 502 (RYKRQEARPR…KMSESQDIKL (354 aa)) are Cytoplasmic-facing. Residues 174–203 (ESLRDLIEQSQSSGSGSGLPLLVQRTIAKQ) form the GS domain. One can recognise a Protein kinase domain in the interval 204–494 (IQMVKQIGKG…LRVKKTLAKM (291 aa)). Residues 210 to 218 (IGKGRYGEV) and Lys-231 contribute to the ATP site. Asp-332 serves as the catalytic Proton acceptor.

This sequence belongs to the protein kinase superfamily. TKL Ser/Thr protein kinase family. TGFB receptor subfamily. As to quaternary structure, interacts with high affinity with GDF5; positively regulates chondrocyte differentiation. Interacts with SCUBE3. Interacts with TSC22D1/TSC-22. Interacts with TGFBR3. Mg(2+) is required as a cofactor. It depends on Mn(2+) as a cofactor. Autophosphorylated.

Its subcellular location is the cell membrane. It carries out the reaction L-threonyl-[receptor-protein] + ATP = O-phospho-L-threonyl-[receptor-protein] + ADP + H(+). It catalyses the reaction L-seryl-[receptor-protein] + ATP = O-phospho-L-seryl-[receptor-protein] + ADP + H(+). Functionally, on ligand binding, forms a receptor complex consisting of two type II and two type I transmembrane serine/threonine kinases. Type II receptors phosphorylate and activate type I receptors which autophosphorylate, then bind and activate SMAD transcriptional regulators. Receptor for BMP7/OP-1. Receptor for GDF5. Positively regulates chondrocyte differentiation through GDF5 interaction. The chain is Bone morphogenetic protein receptor type-1B (Bmpr1b) from Mus musculus (Mouse).